A 271-amino-acid polypeptide reads, in one-letter code: Nus factor SuhB (271 aa).

The Mg(2+) site is built by Glu-67, Asp-86, and Leu-88. Glu-67 is a substrate binding site. Substrate is bound by residues Leu-88–Thr-91, Arg-187, and Asp-216.

The protein belongs to the inositol monophosphatase superfamily. Homodimer. The rRNA transcription and antitermination complex (rrnTAC) consists of RNA polymerase (RNAP), NusA, NusB, NusE (rpsJ), NusG, SubB, ribosomal protein S4, DNA and precursor rRNA; S4 is more flexible than other subunits. Interacts with the ribosome and with RNA polymerase. It depends on Mg(2+) as a cofactor.

The protein localises to the cytoplasm. It catalyses the reaction a myo-inositol phosphate + H2O = myo-inositol + phosphate. Its function is as follows. Part of the processive rRNA transcription and antitermination complex (rrnTAC). The complex forms an RNA-chaperone ring around the RNA exit tunnel of RNA polymerase (RNAP). It supports rapid transcription and antitermination of rRNA operons, cotranscriptional rRNA folding, and annealing of distal rRNA regions to allow correct ribosome biogenesis. This subunit may play a central role in organizing the structure. A ribosome-associated protein, deletion of which alters the expression of 494 genes, suggesting a role in global gene regulation. Involved in control of pathogenesis-related genes. Required for the activation of virulence factors associated with acute infections (type 3 secretion system, T3SS) while suppressing virulence factors associated with chronic infections (biofilm formation and type 6 secretion system, T6SS). It probably acts at a post-transcriptional level. This is Nus factor SuhB from Pseudomonas aeruginosa (strain ATCC 15692 / DSM 22644 / CIP 104116 / JCM 14847 / LMG 12228 / 1C / PRS 101 / PAO1).